Consider the following 243-residue polypeptide: Complement C1q tumor necrosis factor-related protein 5 (243 aa).

Positions 1 to 15 are cleaved as a signal peptide; sequence MRPLLVLLLLGLAAG. A disordered region spans residues 15 to 125; the sequence is GSPPLDDNKI…PPPSDAPLPF (111 aa). The 66-residue stretch at 30-95 folds into the Collagen-like domain; sequence GHPGLPGTPG…AGPAGPTGPA (66 aa). Over residues 83-96 the composition is skewed to low complexity; sequence RGEAGPAGPTGPAG. One can recognise a C1q domain in the interval 99–238; the sequence is SVPPRSAFSA…GFLVYSDWHS (140 aa).

In terms of assembly, may interact with ERFE. Homotrimer (via collagen-like domain). May form higher order oligomers by supercoiling of the trimers.

It is found in the secreted. This Homo sapiens (Human) protein is Complement C1q tumor necrosis factor-related protein 5 (C1QTNF5).